The chain runs to 283 residues: MPVITVYRHGGKGGVAPMNSSHIRTPRGEVQGWSPGAVRRNTEFLMSVREDQLTGAGLALTLTVRDCPPTAQEWQKIRRAWEARMRRAGMIRVHWVTEWQRRGVPHLHCAIWFSGTVYDVLLCVDAWLAVASSCGAGLRGQHGRIIDGVVGWFQYVSKHAARGVRHYQRCSENLPEGWKGLTGRVWGKGGYWPVSDALRIDLQDHRERGDGGYFAYRRLVRSWRVSDARSSGDRYRLRSARRMLTCSDTSRSRAIGFMEWVPLEVMLAFCANLAGRGYSVTSE.

The protein is Putative replication protein XF_b0001 of Xylella fastidiosa (strain 9a5c).